A 366-amino-acid polypeptide reads, in one-letter code: Putative [LysW]-aminoadipate semialdehyde/glutamate semialdehyde transaminase (366 aa).

Pyridoxal 5'-phosphate-binding positions include 90-91 (GT) and F117. Residue R120 participates in substrate binding. 202–205 (DEVQ) serves as a coordination point for pyridoxal 5'-phosphate. K230 is modified (N6-(pyridoxal phosphate)lysine). S254 is a binding site for substrate. Position 255 (T255) interacts with pyridoxal 5'-phosphate.

Belongs to the class-III pyridoxal-phosphate-dependent aminotransferase family. LysJ subfamily. As to quaternary structure, homodimer. The cofactor is pyridoxal 5'-phosphate.

It localises to the cytoplasm. The catalysed reaction is [amino-group carrier protein]-C-terminal-gamma-(L-lysyl)-L-glutamate + 2-oxoglutarate = [amino-group carrier protein]-C-terminal-N-(1-carboxy-5-oxopentan-1-yl)-L-glutamine + L-glutamate. It carries out the reaction [amino-group carrier protein]-C-terminal-gamma-(L-ornithyl)-L-glutamate + 2-oxoglutarate = [amino-group carrier protein]-C-terminal-gamma-(L-glutamyl-5-semialdehyde)-L-glutamate + L-glutamate. It functions in the pathway amino-acid biosynthesis; L-lysine biosynthesis via AAA pathway; L-lysine from L-alpha-aminoadipate (Thermus route): step 4/5. The protein operates within amino-acid biosynthesis; L-arginine biosynthesis. Involved in both the arginine and lysine biosynthetic pathways. This chain is Putative [LysW]-aminoadipate semialdehyde/glutamate semialdehyde transaminase, found in Pyrococcus horikoshii (strain ATCC 700860 / DSM 12428 / JCM 9974 / NBRC 100139 / OT-3).